The sequence spans 642 residues: Threonine--tRNA ligase (642 aa).

In terms of domain architecture, TGS spans 1 to 61 (MPVITLPDGS…ENDATLAIIT (61 aa)). The interval 243–534 (DHRKIGKQLD…LTEEFAGFFP (292 aa)) is catalytic. Zn(2+) contacts are provided by Cys-334, His-385, and His-511.

Belongs to the class-II aminoacyl-tRNA synthetase family. As to quaternary structure, homodimer. It depends on Zn(2+) as a cofactor.

Its subcellular location is the cytoplasm. The enzyme catalyses tRNA(Thr) + L-threonine + ATP = L-threonyl-tRNA(Thr) + AMP + diphosphate + H(+). Its function is as follows. Catalyzes the attachment of threonine to tRNA(Thr) in a two-step reaction: L-threonine is first activated by ATP to form Thr-AMP and then transferred to the acceptor end of tRNA(Thr). Also edits incorrectly charged L-seryl-tRNA(Thr). In Salmonella dublin (strain CT_02021853), this protein is Threonine--tRNA ligase.